Consider the following 105-residue polypeptide: Small ribosomal subunit protein bS20 (105 aa).

The protein belongs to the bacterial ribosomal protein bS20 family.

Binds directly to 16S ribosomal RNA. In Moorella thermoacetica (strain ATCC 39073 / JCM 9320), this protein is Small ribosomal subunit protein bS20.